The chain runs to 301 residues: GTPase Era (301 aa).

Residues 4 to 173 (KAGFVALIGK…LECISQHLSP (170 aa)) enclose the Era-type G domain. Residues 12-19 (GKPNAGKS) are G1. GTP is bound at residue 12-19 (GKPNAGKS). Residues 38-42 (NATRK) form a G2 region. The tract at residues 64–67 (DTPG) is G3. GTP-binding positions include 64 to 68 (DTPGL) and 122 to 125 (SKID). Residues 122-125 (SKID) form a G4 region. A G5 region spans residues 152–154 (LSA). Residues 204–280 (LSDEIPYESD…FLNLQVIAQK (77 aa)) enclose the KH type-2 domain.

This sequence belongs to the TRAFAC class TrmE-Era-EngA-EngB-Septin-like GTPase superfamily. Era GTPase family. Monomer.

It is found in the cytoplasm. Its subcellular location is the cell inner membrane. In terms of biological role, an essential GTPase that binds both GDP and GTP, with rapid nucleotide exchange. Plays a role in 16S rRNA processing and 30S ribosomal subunit biogenesis and possibly also in cell cycle regulation and energy metabolism. The chain is GTPase Era from Helicobacter pylori (strain ATCC 700392 / 26695) (Campylobacter pylori).